Reading from the N-terminus, the 348-residue chain is Histidinol-phosphate aminotransferase (348 aa).

At Lys207 the chain carries N6-(pyridoxal phosphate)lysine.

It belongs to the class-II pyridoxal-phosphate-dependent aminotransferase family. Histidinol-phosphate aminotransferase subfamily. In terms of assembly, homodimer. It depends on pyridoxal 5'-phosphate as a cofactor.

It carries out the reaction L-histidinol phosphate + 2-oxoglutarate = 3-(imidazol-4-yl)-2-oxopropyl phosphate + L-glutamate. It participates in amino-acid biosynthesis; L-histidine biosynthesis; L-histidine from 5-phospho-alpha-D-ribose 1-diphosphate: step 7/9. The polypeptide is Histidinol-phosphate aminotransferase (Crocosphaera subtropica (strain ATCC 51142 / BH68) (Cyanothece sp. (strain ATCC 51142))).